A 419-amino-acid chain; its full sequence is Dimethylamine methyltransferase MtbB2 (419 aa).

Position 308 (Pyl308) is a non-standard amino acid, pyrrolysine.

It belongs to the dimethylamine methyltransferase family.

The catalysed reaction is Co(I)-[dimethylamine-specific corrinoid protein] + dimethylamine + H(+) = methyl-Co(III)-[dimethylamine-specific corrinoid protein] + methylamine. Its pathway is one-carbon metabolism; methanogenesis from dimethylamine. Catalyzes the transfer of a methyl group from dimethylamine to the corrinoid cofactor of MtbC. No evidence for expression of this protein has been found after growth under presumably inducing conditions. In Methanosarcina barkeri, this protein is Dimethylamine methyltransferase MtbB2.